A 474-amino-acid chain; its full sequence is Transmembrane transporter FVEG_12640 (474 aa).

Positions 1–15 (MASPTISSMEQYTPS) are enriched in polar residues. The segment at 1-39 (MASPTISSMEQYTPSSKDEKIVPLHGDAAGSDTEKGESR) is disordered. Helical transmembrane passes span 72-92 (ILAI…LCIV), 133-153 (LVGV…IVTS), 164-184 (GTCT…FSSI), 192-212 (WLTW…VVAV), 231-251 (WAPI…NIFI), 275-295 (ACLV…LVIY), 317-337 (VAYG…QHVA), 364-384 (LGIN…VPIL), 387-407 (LLGL…PALL), and 431-451 (LIMI…AVLI).

It belongs to the amino acid/polyamine transporter 2 family.

It is found in the membrane. Functionally, transmembrane transporter; part of the Fusarium detoxification of benzoxazolinone cluster 2 (FDB2) involved in the degradation of benzoxazolinones produced by the host plant. Maize, wheat, and rye produce the 2 benzoxazinone phytoanticipins 2,4-dihy-droxy-7-methoxy-1,4-benzoxazin-3-one (DIMBOA) and 2,4-dihydroxy-1,4-benzoxazin-3-one (DIBOA) that, due to their inherent instability once released, spontaneously degrade to the more stable corresponding benzoxazolinones, 6-methoxy-2-benzoxazolinone (MBOA) and 2-benzoxazolinone (BOA), respectively. Might be involved in the transport of metabolites of benzoxazolinone degradation. In Gibberella moniliformis (strain M3125 / FGSC 7600) (Maize ear and stalk rot fungus), this protein is Transmembrane transporter FVEG_12640.